Here is a 173-residue protein sequence, read N- to C-terminus: Probable DNA-directed RNA polymerase subunit delta (173 aa).

The region spanning N14 to W81 is the HTH HARE-type domain. Residues L113 to E173 are disordered. Positions G115–E173 are enriched in acidic residues.

The protein belongs to the RpoE family. As to quaternary structure, RNAP is composed of a core of 2 alpha, a beta and a beta' subunits. The core is associated with a delta subunit and one of several sigma factors.

In terms of biological role, participates in both the initiation and recycling phases of transcription. In the presence of the delta subunit, RNAP displays an increased specificity of transcription, a decreased affinity for nucleic acids, and an increased efficiency of RNA synthesis because of enhanced recycling. The polypeptide is Probable DNA-directed RNA polymerase subunit delta (Macrococcus caseolyticus (strain JCSC5402) (Macrococcoides caseolyticum)).